Here is a 558-residue protein sequence, read N- to C-terminus: Formate--tetrahydrofolate ligase (558 aa).

67–74 (TPAGEGKT) contacts ATP.

The protein belongs to the formate--tetrahydrofolate ligase family.

The catalysed reaction is (6S)-5,6,7,8-tetrahydrofolate + formate + ATP = (6R)-10-formyltetrahydrofolate + ADP + phosphate. Its pathway is one-carbon metabolism; tetrahydrofolate interconversion. This is Formate--tetrahydrofolate ligase from Ruegeria sp. (strain TM1040) (Silicibacter sp.).